A 685-amino-acid chain; its full sequence is Putative protein FAR1-RELATED SEQUENCE 10 (685 aa).

The FAR1 domain occupies 69–161 (EYYSTFARKS…SNVHNHELLE (93 aa)). The MULE domain maps to 292 to 388 (VVVFDTSYRS…FMSHIVSKLA (97 aa)). An SWIM-type zinc finger spans residues 565 to 603 (GECCVIWNPENEEIQCSCKEFEHSGILCRHTLRVLTVKN).

This sequence belongs to the FHY3/FAR1 family.

This is Putative protein FAR1-RELATED SEQUENCE 10 (FRS10) from Arabidopsis thaliana (Mouse-ear cress).